The chain runs to 541 residues: Phosphoenolpyruvate carboxykinase (ATP) (541 aa).

243-250 (GLSGTGKT) is an ATP binding site.

This sequence belongs to the phosphoenolpyruvate carboxykinase (ATP) family.

The catalysed reaction is oxaloacetate + ATP = phosphoenolpyruvate + ADP + CO2. It functions in the pathway carbohydrate biosynthesis; gluconeogenesis. The protein is Phosphoenolpyruvate carboxykinase (ATP) (PCK1) of Eremothecium gossypii (strain ATCC 10895 / CBS 109.51 / FGSC 9923 / NRRL Y-1056) (Yeast).